The sequence spans 159 residues: MAEQTEKAFLKQPKVFLSTKKTGKGKRPGKGGNRFWKSIGLGFKTPREAIEGTYIDKKCPFTGNVSIRGRILAGTCHSAKMNRTIIVRRNYLHFIKKYQRYEKRHSNIPAHISPAFRVKEGDHVIIGQCRPLSKTVRFNVLKVIPAGSSSGAKKAFTGM.

Belongs to the universal ribosomal protein uS17 family.

The chain is Small ribosomal subunit protein uS17 (RPS11) from Glycine max (Soybean).